The primary structure comprises 221 residues: Succinate--CoA ligase [ADP-forming] subunit beta, mitochondrial (221 aa).

An ATP-grasp domain is found at 1–122; the sequence is DVVIKAQVLA…DSNSAYRQKI (122 aa). Lys-5 is a binding site for ATP. Lys-22 and Lys-26 each carry N6-acetyllysine. Position 114 is a phosphoserine (Ser-114). Residue Thr-139 is modified to Phosphothreonine. 171-173 contacts substrate; the sequence is GIM. Position 196 is an N6-acetyllysine (Lys-196).

The protein belongs to the succinate/malate CoA ligase beta subunit family. ATP-specific subunit beta subfamily. Heterodimer of an alpha and a beta subunit. The beta subunit determines specificity for ATP. Interacts with ALAS2.

The protein resides in the mitochondrion. The catalysed reaction is succinate + ATP + CoA = succinyl-CoA + ADP + phosphate. It participates in carbohydrate metabolism; tricarboxylic acid cycle; succinate from succinyl-CoA (ligase route): step 1/1. In terms of biological role, ATP-specific succinyl-CoA synthetase functions in the citric acid cycle (TCA), coupling the hydrolysis of succinyl-CoA to the synthesis of ATP and thus represents the only step of substrate-level phosphorylation in the TCA. The beta subunit provides nucleotide specificity of the enzyme and binds the substrate succinate, while the binding sites for coenzyme A and phosphate are found in the alpha subunit. This is Succinate--CoA ligase [ADP-forming] subunit beta, mitochondrial from Mesocricetus auratus (Golden hamster).